Reading from the N-terminus, the 301-residue chain is Protein FdhE homolog (301 aa).

It belongs to the FdhE family.

The protein localises to the cytoplasm. In terms of biological role, necessary for formate dehydrogenase activity. In Shewanella baltica (strain OS223), this protein is Protein FdhE homolog.